The following is a 629-amino-acid chain: tRNA uridine 5-carboxymethylaminomethyl modification enzyme MnmG (629 aa).

Residue 13–18 (GGGHAG) participates in FAD binding. Position 273–287 (273–287 (GPRYCPSIEDKITRF)) interacts with NAD(+).

Belongs to the MnmG family. As to quaternary structure, homodimer. Heterotetramer of two MnmE and two MnmG subunits. The cofactor is FAD.

Its subcellular location is the cytoplasm. In terms of biological role, NAD-binding protein involved in the addition of a carboxymethylaminomethyl (cmnm) group at the wobble position (U34) of certain tRNAs, forming tRNA-cmnm(5)s(2)U34. The sequence is that of tRNA uridine 5-carboxymethylaminomethyl modification enzyme MnmG from Aeromonas salmonicida (strain A449).